A 198-amino-acid chain; its full sequence is Mediator of RNA polymerase II transcription subunit 20 (198 aa).

This sequence belongs to the Mediator complex subunit 20 family. Component of the Mediator complex.

Its subcellular location is the nucleus. Its function is as follows. Component of the Mediator complex, a coactivator involved in the regulated transcription of nearly all RNA polymerase II-dependent genes. Mediator functions as a bridge to convey information from gene-specific regulatory proteins to the basal RNA polymerase II transcription machinery. Mediator is recruited to promoters by direct interactions with regulatory proteins and serves as a scaffold for the assembly of a functional preinitiation complex with RNA polymerase II and the general transcription factors. This chain is Mediator of RNA polymerase II transcription subunit 20 (mdt-20), found in Caenorhabditis briggsae.